A 146-amino-acid polypeptide reads, in one-letter code: Hemoglobin subunit beta-1 (146 aa).

Residues 2–146 (GLTAHDRQLI…IADALGKGYH (145 aa)) form the Globin domain. The heme b site is built by His63 and His92.

Belongs to the globin family. Heterotetramer of two alpha chains and two beta chains. Red blood cells.

Its function is as follows. Involved in oxygen transport from the lung to the various peripheral tissues. The protein is Hemoglobin subunit beta-1 (hbb1) of Xenopus borealis (Kenyan clawed frog).